The sequence spans 414 residues: Serine hydroxymethyltransferase (414 aa).

Residues L118 and 122–124 (GHL) contribute to the (6S)-5,6,7,8-tetrahydrofolate site. K227 is subject to N6-(pyridoxal phosphate)lysine. (6S)-5,6,7,8-tetrahydrofolate contacts are provided by residues E240 and 350–352 (SPF).

It belongs to the SHMT family. As to quaternary structure, homodimer. It depends on pyridoxal 5'-phosphate as a cofactor.

It is found in the cytoplasm. The enzyme catalyses (6R)-5,10-methylene-5,6,7,8-tetrahydrofolate + glycine + H2O = (6S)-5,6,7,8-tetrahydrofolate + L-serine. The protein operates within one-carbon metabolism; tetrahydrofolate interconversion. It participates in amino-acid biosynthesis; glycine biosynthesis; glycine from L-serine: step 1/1. In terms of biological role, catalyzes the reversible interconversion of serine and glycine with tetrahydrofolate (THF) serving as the one-carbon carrier. This reaction serves as the major source of one-carbon groups required for the biosynthesis of purines, thymidylate, methionine, and other important biomolecules. Also exhibits THF-independent aldolase activity toward beta-hydroxyamino acids, producing glycine and aldehydes, via a retro-aldol mechanism. The polypeptide is Serine hydroxymethyltransferase (Bacillus thuringiensis (strain Al Hakam)).